Consider the following 128-residue polypeptide: Large ribosomal subunit protein eL31 (128 aa).

This sequence belongs to the eukaryotic ribosomal protein eL31 family.

In Drosophila virilis (Fruit fly), this protein is Large ribosomal subunit protein eL31 (RpL31).